We begin with the raw amino-acid sequence, 635 residues long: Glutamine--fructose-6-phosphate aminotransferase [isomerizing] (635 aa).

Catalysis depends on C2, which acts as the Nucleophile; for GATase activity. Residues 2–218 (CGIVGMVAGR…EGDIADVHRD (217 aa)) form the Glutamine amidotransferase type-2 domain. SIS domains are found at residues 299–439 (FERL…AKKI) and 472–625 (CARH…IDQP). K630 acts as the For Fru-6P isomerization activity in catalysis.

Homodimer.

It is found in the cytoplasm. It carries out the reaction D-fructose 6-phosphate + L-glutamine = D-glucosamine 6-phosphate + L-glutamate. In terms of biological role, catalyzes the first step in hexosamine metabolism, converting fructose-6P into glucosamine-6P using glutamine as a nitrogen source. The protein is Glutamine--fructose-6-phosphate aminotransferase [isomerizing] of Treponema pallidum (strain Nichols).